Here is a 95-residue protein sequence, read N- to C-terminus: Aspartyl/glutamyl-tRNA(Asn/Gln) amidotransferase subunit C (95 aa).

Belongs to the GatC family. In terms of assembly, heterotrimer of A, B and C subunits.

The enzyme catalyses L-glutamyl-tRNA(Gln) + L-glutamine + ATP + H2O = L-glutaminyl-tRNA(Gln) + L-glutamate + ADP + phosphate + H(+). It catalyses the reaction L-aspartyl-tRNA(Asn) + L-glutamine + ATP + H2O = L-asparaginyl-tRNA(Asn) + L-glutamate + ADP + phosphate + 2 H(+). Functionally, allows the formation of correctly charged Asn-tRNA(Asn) or Gln-tRNA(Gln) through the transamidation of misacylated Asp-tRNA(Asn) or Glu-tRNA(Gln) in organisms which lack either or both of asparaginyl-tRNA or glutaminyl-tRNA synthetases. The reaction takes place in the presence of glutamine and ATP through an activated phospho-Asp-tRNA(Asn) or phospho-Glu-tRNA(Gln). The chain is Aspartyl/glutamyl-tRNA(Asn/Gln) amidotransferase subunit C from Alcanivorax borkumensis (strain ATCC 700651 / DSM 11573 / NCIMB 13689 / SK2).